Here is a 640-residue protein sequence, read N- to C-terminus: Glycosyltransferase-like protein gnt14 (640 aa).

Topologically, residues Met-1 to Arg-14 are cytoplasmic. The helical; Signal-anchor for type II membrane protein transmembrane segment at Leu-15–Ile-35 threads the bilayer. Topologically, residues Gln-36–Trp-640 are extracellular. 2 disordered regions span residues Pro-63–Ser-184 and Asn-254–Tyr-277. Over residues Ile-65–Pro-171 the composition is skewed to low complexity. N-linked (GlcNAc...) asparagine glycosylation occurs at Asn-68. Residues Asn-410 and Asn-539 are each glycosylated (N-linked (GlcNAc...) asparagine).

It belongs to the glycosyltransferase 8 family. Highly divergent.

The protein localises to the membrane. The sequence is that of Glycosyltransferase-like protein gnt14 (gnt14) from Dictyostelium discoideum (Social amoeba).